The sequence spans 436 residues: Fibrinogen gamma chain (436 aa).

Positions 1–25 (MSWSLQPPSFLLCCLLLLFSPTGLA) are cleaved as a signal peptide. An N-linked (GlcNAc...) asparagine glycan is attached at Asn77. Positions 169 to 415 (QIHDTTGKDC…ETTMKIIPFN (247 aa)) constitute a Fibrinogen C-terminal domain. The cysteines at positions 178 and 207 are disulfide-linked. Positions 343, 345, and 349 each coordinate Ca(2+). Residues Cys351 and Cys364 are joined by a disulfide bond. Residue Gln423 forms an Isoglutamyl lysine isopeptide (Gln-Lys) (interchain with K-431) linkage. Phosphoserine is present on Ser430. Residue Lys431 forms an Isoglutamyl lysine isopeptide (Lys-Gln) (interchain with Q-423) linkage.

As to quaternary structure, heterohexamer; disulfide linked. Contains 2 sets of 3 non-identical chains (alpha, beta and gamma). The 2 heterotrimers are in head to head conformation with the N-termini in a small central domain. In terms of processing, conversion of fibrinogen to fibrin is triggered by thrombin, which cleaves fibrinopeptides A and B from alpha and beta chains, and thus exposes the N-terminal polymerization sites responsible for the formation of the soft clot. The soft clot is converted into the hard clot by factor XIIIA which catalyzes the epsilon-(gamma-glutamyl)lysine cross-linking between gamma chains (stronger) and between alpha chains (weaker) of different monomers.

The protein resides in the secreted. Together with fibrinogen alpha (FGA) and fibrinogen beta (FGB), polymerizes to form an insoluble fibrin matrix. Fibrin has a major function in hemostasis as one of the primary components of blood clots. In addition, functions during the early stages of wound repair to stabilize the lesion and guide cell migration during re-epithelialization. Was originally thought to be essential for platelet aggregation, based on in vitro studies using anticoagulated blood. However, subsequent studies have shown that it is not absolutely required for thrombus formation in vivo. Enhances expression of SELP in activated platelets via an ITGB3-dependent pathway. Maternal fibrinogen is essential for successful pregnancy. Fibrin deposition is also associated with infection, where it protects against IFNG-mediated hemorrhage. May also facilitate the immune response via both innate and T-cell mediated pathways. The sequence is that of Fibrinogen gamma chain (Fgg) from Mus musculus (Mouse).